Consider the following 337-residue polypeptide: Inositol 2-dehydrogenase (337 aa).

It belongs to the Gfo/Idh/MocA family. In terms of assembly, homotetramer.

The enzyme catalyses myo-inositol + NAD(+) = scyllo-inosose + NADH + H(+). Its function is as follows. Involved in the oxidation of myo-inositol (MI) to 2-keto-myo-inositol (2KMI or 2-inosose). The chain is Inositol 2-dehydrogenase from Ralstonia nicotianae (strain ATCC BAA-1114 / GMI1000) (Ralstonia solanacearum).